Here is a 166-residue protein sequence, read N- to C-terminus: UPF0304 protein VS_1049 (166 aa).

This sequence belongs to the UPF0304 family.

This chain is UPF0304 protein VS_1049, found in Vibrio atlanticus (strain LGP32) (Vibrio splendidus (strain Mel32)).